The following is a 216-amino-acid chain: MIMSLLDELKQAIIDGDEDIVAELSQKAVDEDLDLVDTVQSGLVKGIEVVGTAWKEGEMFLPDVMMSAEAMKVGLAILEPEIAKKGMSEGESKGKIVLGTVEGDIHDIGKNITGAMFTAAGYKVIDLGTDIKAEGFVAKAQEVGADIIGASALLTTTMIKQKELIEYLKEKNLRDSYKVLVGGGPTSQVWADEIGADGWAETADDAVELANKILGK.

A B12-binding N-terminal domain is found at 1–90 (MIMSLLDELK…EIAKKGMSEG (90 aa)). The 124-residue stretch at 93-216 (KGKIVLGTVE…VELANKILGK (124 aa)) folds into the B12-binding domain. Methylcob(III)alamin is bound at residue H106.

It belongs to the methylamine corrinoid protein family.

Its function is as follows. Probably harbors a corrinoid prosthetic group and acts as a methyl group carrier between MtgB and MtgA. A methyl group from glycine betaine is likely first transferred to the corrinoid prosthetic group of the enzyme by MtgB, and then transferred to tetrahydrofolate (THF) by MtgA. The methyl group may then be ultimately converted to carbon dioxide, and its oxidation would also provide reducing equivalents for anaerobic respiration. Thus, may function in the pathway that allows anaerobic methylotrophic growth of D.hafniense using glycine betaine. The polypeptide is Corrinoid protein DSY3155 (Desulfitobacterium hafniense (strain Y51)).